Here is a 532-residue protein sequence, read N- to C-terminus: Eukaryotic translation initiation factor 4B1 (532 aa).

Disordered regions lie at residues 16-365 (EAER…LEEQ), 401-434 (KKLEKESVAPEIKESDQEPGSNNNHNDLPEIIRG), and 451-532 (RFRQ…REGW). The segment covering 26-35 (AEATAATADT) has biased composition (low complexity). Gly residues-rich tracts occupy residues 105 to 120 (RLGGGFSSYGGRSGGR) and 132 to 147 (WSGGGGGGGRRPYGGG). The span at 167–180 (RADEVDDWGKEKKP) shows a compositional bias: basic and acidic residues. The short motif at 177 to 184 (EKKPLPSF) is the Nuclear localization signal 1 element. Residues 193-217 (SGDGGGFGGGGSGFGGGGGGGGGGL) show a composition bias toward gly residues. The Nuclear localization signal 2 signature appears at 237–244 (SSTFGSSF). Over residues 237–247 (SSTFGSSFGDS) the composition is skewed to low complexity. Composition is skewed to basic and acidic residues over residues 249-263 (QEERRRLVLEPRKVE) and 286-310 (RPREDVLAEKGLDWKKIDSEIEAKK). The span at 315-337 (TSRPTSAHSSRPSSAQSNRSESS) shows a compositional bias: low complexity. Basic and acidic residues-rich tracts occupy residues 355–365 (AKPREVLLEEQ), 401–416 (KKLEKESVAPEIKESD), 472–494 (ERTHSRAGSIDETRSFESTERPR), and 507–520 (NEQRRNFQGTKERG).

Belongs to the eIF-4 subunit B family. In terms of assembly, homodimer. Nonspherical monomer. mRNA-discriminating component of initiation complexes. Phosphorylated.

It localises to the nucleus. Promotes the eIF4F and eIF4A RNA-dependent ATP-hydrolysis activity with different efficiency depending on mRNAs, thus providing mRNA discrimination during initiation of translation. This chain is Eukaryotic translation initiation factor 4B1, found in Arabidopsis thaliana (Mouse-ear cress).